A 690-amino-acid polypeptide reads, in one-letter code: MSSSSGPLSPQSTTATSSLAAKAANPLSSKVTTVLSSSYADTEFREALALLDERGVQNTAETRRQLRLDLQKEVIDSNGEIIDEFAKVAEQLRRIGTTIGRLNETFNEMKTQIGSAQKTTSSTLIEASQLMIQRRQVEQKQALLGAFNTNFVLSEDETAALTLTSEPVDDLFFAVLAKAKRISKDCEILLGFENQTLGLEIMEQTSKNLNLGFQKLYKWVQREFKTLNLENPQIGSSIRHALRVLAERPSLFQNCLDFLAEAREHVLSNSFHTALTGSSPSGIEDQSVKPIELVAHDTLRYVGDMLAWAHSAAVGEREALEGLFIGEGDEIAKGIQAGRDNEIWRLVAEDGEVSDTFDAVETLNELVDRDLSGAARLLRQRVEQVIQTNEETILAYKLANLLNFYKSTFSRLLSVGSALVETLGALESEALRQFRSLARDHVAAIQGDFQHTPADLRPPEFLLGALEQLAAIMKTYETSFTSSSDREEEFEPVLAEAFDPFISGSANMAKPLRAPSNSIFLINCLLTAERSLSRFDFTQRRAARLQAQIQEERARLVETQYRFFRGESGLDSLIVQLEPLGESKEDIQKALLLESLQSPALSQASQKLDDFLPSALMDAMENLKNLQDSRLVQSITEEAAEKFCVDFEHVEEMLILVDEATEQKQNEQDDIQGPRTLFPRTSGEIRVLLS.

A disordered region spans residues 1 to 22; that stretch reads MSSSSGPLSPQSTTATSSLAAK.

Belongs to the COG6 family.

It localises to the golgi apparatus membrane. Its function is as follows. Acts as a component of the peripheral membrane COG complex that is involved in intra-Golgi protein trafficking. COG is located at the cis-Golgi, and regulates tethering of retrograde intra-Golgi vesicles and possibly a number of other membrane trafficking events. This is Conserved oligomeric Golgi complex subunit 6 (COG6) from Chaetomium globosum (strain ATCC 6205 / CBS 148.51 / DSM 1962 / NBRC 6347 / NRRL 1970) (Soil fungus).